The primary structure comprises 252 residues: 3-deoxy-manno-octulosonate cytidylyltransferase (252 aa).

The protein belongs to the KdsB family.

It localises to the cytoplasm. The enzyme catalyses 3-deoxy-alpha-D-manno-oct-2-ulosonate + CTP = CMP-3-deoxy-beta-D-manno-octulosonate + diphosphate. The protein operates within nucleotide-sugar biosynthesis; CMP-3-deoxy-D-manno-octulosonate biosynthesis; CMP-3-deoxy-D-manno-octulosonate from 3-deoxy-D-manno-octulosonate and CTP: step 1/1. It participates in bacterial outer membrane biogenesis; lipopolysaccharide biosynthesis. Functionally, activates KDO (a required 8-carbon sugar) for incorporation into bacterial lipopolysaccharide in Gram-negative bacteria. In Rhodospirillum rubrum (strain ATCC 11170 / ATH 1.1.1 / DSM 467 / LMG 4362 / NCIMB 8255 / S1), this protein is 3-deoxy-manno-octulosonate cytidylyltransferase.